We begin with the raw amino-acid sequence, 440 residues long: Transposon Ty1-BL Gag polyprotein (440 aa).

Polar residues-rich tracts occupy residues 20 to 31 (SVTSKEVQTTQD), 46 to 55 (VSTQANSQQP), and 137 to 168 (VGTH…TNQH). 3 disordered regions span residues 20 to 84 (SVTS…QNGP), 137 to 173 (VGTH…RPPP), and 350 to 424 (QQES…TTEP). Positions 299-401 (NNGIPINNKV…NSQSRTARAH (103 aa)) are RNA-binding. Positions 363 to 372 (SPSDEKKDSR) are enriched in basic and acidic residues. Over residues 373-411 (TYTNTTKPKSITRNSQKPNNSQSRTARAHNVSTFNNSPG) the composition is skewed to polar residues.

Homotrimer.

The protein localises to the cytoplasm. In terms of biological role, capsid protein (CA) is the structural component of the virus-like particle (VLP), forming the shell that encapsulates the retrotransposons dimeric RNA genome. The particles are assembled from trimer-clustered units and there are holes in the capsid shells that allow for the diffusion of macromolecules. CA also has nucleocapsid-like chaperone activity, promoting primer tRNA(i)-Met annealing to the multipartite primer-binding site (PBS), dimerization of Ty1 RNA and initiation of reverse transcription. This Saccharomyces cerevisiae (strain ATCC 204508 / S288c) (Baker's yeast) protein is Transposon Ty1-BL Gag polyprotein (TY1A-BL).